A 149-amino-acid chain; its full sequence is Large ribosomal subunit protein bL9 (149 aa).

It belongs to the bacterial ribosomal protein bL9 family.

In terms of biological role, binds to the 23S rRNA. The sequence is that of Large ribosomal subunit protein bL9 from Histophilus somni (strain 129Pt) (Haemophilus somnus).